The sequence spans 137 residues: uncharacterized protein (137 aa).

The next 2 helical transmembrane spans lie at 36-52 (LAPP…PFVL) and 113-129 (FYGY…IFCF).

The protein localises to the membrane. This is an uncharacterized protein from Saccharomyces cerevisiae (strain ATCC 204508 / S288c) (Baker's yeast).